Here is a 586-residue protein sequence, read N- to C-terminus: uncharacterized protein (586 aa).

Residues 29 to 312 (YGIAIGSMVV…LARMRISLES (284 aa)) form the ABC transmembrane type-1 domain. 4 helical membrane-spanning segments follow: residues 30 to 50 (GIAI…AWIM), 66 to 86 (VFGV…ATYV), 162 to 184 (MVIQ…ILGV), and 256 to 276 (IMET…GVLV). The ABC transporter domain occupies 346–580 (IRFKDVNFSY…DGVYRRLYEL (235 aa)). 379 to 386 (GPSGAGKS) serves as a coordination point for ATP.

The protein belongs to the ABC transporter superfamily.

The protein localises to the cell membrane. This is an uncharacterized protein from Sinorhizobium fredii (strain NBRC 101917 / NGR234).